A 140-amino-acid chain; its full sequence is Putative pre-16S rRNA nuclease (140 aa).

This sequence belongs to the YqgF nuclease family.

The protein resides in the cytoplasm. Its function is as follows. Could be a nuclease involved in processing of the 5'-end of pre-16S rRNA. This chain is Putative pre-16S rRNA nuclease, found in Yersinia pseudotuberculosis serotype O:1b (strain IP 31758).